The primary structure comprises 677 residues: Methionine--tRNA ligase (677 aa).

The short motif at 15–25 is the 'HIGH' region element; the sequence is PYANGSIHLGH. Residues Cys-146, Cys-149, Cys-159, and Cys-162 each contribute to the Zn(2+) site. Residues 333-337 carry the 'KMSKS' region motif; sequence KMSKS. Lys-336 is a binding site for ATP. A tRNA-binding domain is found at 575–677; it reads DFAKIDLRVA…DGAKPGQQVK (103 aa).

The protein belongs to the class-I aminoacyl-tRNA synthetase family. MetG type 1 subfamily. In terms of assembly, homodimer. Requires Zn(2+) as cofactor.

The protein resides in the cytoplasm. The enzyme catalyses tRNA(Met) + L-methionine + ATP = L-methionyl-tRNA(Met) + AMP + diphosphate. Is required not only for elongation of protein synthesis but also for the initiation of all mRNA translation through initiator tRNA(fMet) aminoacylation. This Salmonella paratyphi B (strain ATCC BAA-1250 / SPB7) protein is Methionine--tRNA ligase.